We begin with the raw amino-acid sequence, 252 residues long: Imidazole glycerol phosphate synthase subunit HisF (252 aa).

Active-site residues include D11 and D130.

It belongs to the HisA/HisF family. Heterodimer of HisH and HisF.

The protein resides in the cytoplasm. The enzyme catalyses 5-[(5-phospho-1-deoxy-D-ribulos-1-ylimino)methylamino]-1-(5-phospho-beta-D-ribosyl)imidazole-4-carboxamide + L-glutamine = D-erythro-1-(imidazol-4-yl)glycerol 3-phosphate + 5-amino-1-(5-phospho-beta-D-ribosyl)imidazole-4-carboxamide + L-glutamate + H(+). The protein operates within amino-acid biosynthesis; L-histidine biosynthesis; L-histidine from 5-phospho-alpha-D-ribose 1-diphosphate: step 5/9. Its function is as follows. IGPS catalyzes the conversion of PRFAR and glutamine to IGP, AICAR and glutamate. The HisF subunit catalyzes the cyclization activity that produces IGP and AICAR from PRFAR using the ammonia provided by the HisH subunit. In Desulforudis audaxviator (strain MP104C), this protein is Imidazole glycerol phosphate synthase subunit HisF.